The sequence spans 185 residues: Deoxyuridine 5'-triphosphate nucleotidohydrolase (185 aa).

A disordered region spans residues 1 to 23; sequence MSHLQAHMQRNNKESHSLSPFSQ. Substrate contacts are provided by residues 95 to 97, Asn-108, 112 to 114, and Lys-122; these read RSG and TID. The interval 160–185 is disordered; that stretch reads DQKDSSQTPSNEGSRGADGFGSTGHD. A compositionally biased stretch (gly residues) spans 175–185; the sequence is GADGFGSTGHD.

This sequence belongs to the dUTPase family. Mg(2+) serves as cofactor.

The enzyme catalyses dUTP + H2O = dUMP + diphosphate + H(+). It participates in pyrimidine metabolism; dUMP biosynthesis; dUMP from dCTP (dUTP route): step 2/2. This enzyme is involved in nucleotide metabolism: it produces dUMP, the immediate precursor of thymidine nucleotides and it decreases the intracellular concentration of dUTP so that uracil cannot be incorporated into DNA. This Bartonella quintana (strain Toulouse) (Rochalimaea quintana) protein is Deoxyuridine 5'-triphosphate nucleotidohydrolase.